Consider the following 364-residue polypeptide: Adenine deaminase (364 aa).

Zn(2+) is bound by residues His-25, His-27, and His-221. Glu-224 (proton donor) is an active-site residue. Asp-301 is a binding site for Zn(2+). Residue Asp-302 coordinates substrate.

Belongs to the metallo-dependent hydrolases superfamily. Adenosine and AMP deaminases family. Adenine deaminase type 2 subfamily. The cofactor is Zn(2+).

The protein resides in the cytoplasm. The protein localises to the nucleus. The catalysed reaction is adenine + H2O + H(+) = hypoxanthine + NH4(+). Functionally, catalyzes the hydrolytic deamination of adenine to hypoxanthine. Plays an important role in the purine salvage pathway and in nitrogen catabolism. Has no activity with adenosine as a substrate. This Emericella nidulans (strain FGSC A4 / ATCC 38163 / CBS 112.46 / NRRL 194 / M139) (Aspergillus nidulans) protein is Adenine deaminase (aah1).